We begin with the raw amino-acid sequence, 347 residues long: Probable dual-specificity RNA methyltransferase RlmN (347 aa).

The active-site Proton acceptor is the Glu91. The Radical SAM core domain occupies 97–327; sequence YKYGNSICVS…ATVRREMGSD (231 aa). Cys104 and Cys332 are disulfide-bonded. [4Fe-4S] cluster-binding residues include Cys111, Cys115, and Cys118. S-adenosyl-L-methionine contacts are provided by residues 158-159, Ser190, 213-215, and Asn289; these read GE and SLH. The active-site S-methylcysteine intermediate is Cys332.

It belongs to the radical SAM superfamily. RlmN family. [4Fe-4S] cluster serves as cofactor.

It localises to the cytoplasm. The enzyme catalyses adenosine(2503) in 23S rRNA + 2 reduced [2Fe-2S]-[ferredoxin] + 2 S-adenosyl-L-methionine = 2-methyladenosine(2503) in 23S rRNA + 5'-deoxyadenosine + L-methionine + 2 oxidized [2Fe-2S]-[ferredoxin] + S-adenosyl-L-homocysteine. The catalysed reaction is adenosine(37) in tRNA + 2 reduced [2Fe-2S]-[ferredoxin] + 2 S-adenosyl-L-methionine = 2-methyladenosine(37) in tRNA + 5'-deoxyadenosine + L-methionine + 2 oxidized [2Fe-2S]-[ferredoxin] + S-adenosyl-L-homocysteine. Its function is as follows. Specifically methylates position 2 of adenine 2503 in 23S rRNA and position 2 of adenine 37 in tRNAs. The sequence is that of Probable dual-specificity RNA methyltransferase RlmN from Clostridium perfringens (strain SM101 / Type A).